The following is a 1334-amino-acid chain: SCAR-like protein 2 (1334 aa).

The segment covering 197–207 has biased composition (basic and acidic residues); that stretch reads KTGNFQREKKS. Disordered regions lie at residues 197-281, 294-331, 481-516, 568-602, 643-668, 791-832, 931-956, 1000-1026, 1248-1268, and 1280-1304; these read KTGN…SSFS, DTKPTVVPHENGHDKLSNNNLHKLSNTPLHTRLNGTSA, PDSSVAEFPDAYQNSSMPPAPESAADFPSLSSADAP, PNQSLPDSKEIPDSKAEDAPIDSPEKLEPGPSSYT, DKPTNEVSATNSSPDDTSSDEDTVES, STSH…KNII, FEKKTENDTNGLPKSSLFSSSHYSEK, FQLLPGSSVPQLGSGSESEDDTFGRSY, SGQQKLNGHEKSKAVGNDTKN, and RSKTFNLRRTNASKTNTSSPTTANS. Residues 241–256 show a composition bias toward polar residues; it reads VQLTSRHFATPSTDGR. A compositionally biased stretch (low complexity) spans 310–319; that stretch reads SNNNLHKLSN. A compositionally biased stretch (polar residues) spans 320-330; it reads TPLHTRLNGTS. Positions 574-595 are enriched in basic and acidic residues; sequence DSKEIPDSKAEDAPIDSPEKLE. Residues 791-823 are compositionally biased toward polar residues; the sequence is STSHSSETNQSTVRTPDTVIGQTEGSTGCSTSF. Low complexity predominate over residues 945 to 956; that stretch reads SSLFSSSHYSEK. The segment covering 1248 to 1260 has biased composition (basic and acidic residues); it reads SGQQKLNGHEKSK. Positions 1271 to 1289 constitute a WH2 domain; the sequence is EREELLQQIRSKTFNLRRT. Residues 1289 to 1304 are compositionally biased toward low complexity; the sequence is TNASKTNTSSPTTANS.

The protein belongs to the SCAR/WAVE family.

Its subcellular location is the cytoplasm. It is found in the cytoskeleton. In terms of biological role, involved in regulation of actin and microtubule organization. Part of a WAVE complex that activates the Arp2/3 complex. In Oryza sativa subsp. japonica (Rice), this protein is SCAR-like protein 2.